We begin with the raw amino-acid sequence, 485 residues long: Glutamyl-tRNA(Gln) amidotransferase subunit A (485 aa).

Active-site charge relay system residues include Lys78 and Ser153. Ser177 acts as the Acyl-ester intermediate in catalysis.

This sequence belongs to the amidase family. GatA subfamily. As to quaternary structure, heterotrimer of A, B and C subunits.

The enzyme catalyses L-glutamyl-tRNA(Gln) + L-glutamine + ATP + H2O = L-glutaminyl-tRNA(Gln) + L-glutamate + ADP + phosphate + H(+). In terms of biological role, allows the formation of correctly charged Gln-tRNA(Gln) through the transamidation of misacylated Glu-tRNA(Gln) in organisms which lack glutaminyl-tRNA synthetase. The reaction takes place in the presence of glutamine and ATP through an activated gamma-phospho-Glu-tRNA(Gln). This is Glutamyl-tRNA(Gln) amidotransferase subunit A from Geotalea daltonii (strain DSM 22248 / JCM 15807 / FRC-32) (Geobacter daltonii).